A 353-amino-acid chain; its full sequence is Photosystem II D2 protein (353 aa).

T2 is modified (N-acetylthreonine). A Phosphothreonine modification is found at T2. A helical membrane pass occupies residues 41-61 (CAYFALGGWFTGTTFVTSWYT). Position 118 (H118) interacts with chlorophyll a. A helical transmembrane segment spans residues 125 to 141 (GFMLRQFELARSVQLRP). 2 residues coordinate pheophytin a: Q130 and N143. A helical membrane pass occupies residues 153–166 (VFVSVFLIYPLGQS). H198 serves as a coordination point for chlorophyll a. Residues 208 to 228 (AALLCAIHGATVENLYFEDGD) traverse the membrane as a helical segment. Residues H215 and F262 each contribute to the a plastoquinone site. H215 serves as a coordination point for Fe cation. Residue H269 coordinates Fe cation. Residues 279–295 (GLWMSALGVVGLALNLR) form a helical membrane-spanning segment.

It belongs to the reaction center PufL/M/PsbA/D family. In terms of assembly, PSII is composed of 1 copy each of membrane proteins PsbA, PsbB, PsbC, PsbD, PsbE, PsbF, PsbH, PsbI, PsbJ, PsbK, PsbL, PsbM, PsbT, PsbX, PsbY, PsbZ, Psb30/Ycf12, at least 3 peripheral proteins of the oxygen-evolving complex and a large number of cofactors. It forms dimeric complexes. The D1/D2 heterodimer binds P680, chlorophylls that are the primary electron donor of PSII, and subsequent electron acceptors. It shares a non-heme iron and each subunit binds pheophytin, quinone, additional chlorophylls, carotenoids and lipids. There is also a Cl(-1) ion associated with D1 and D2, which is required for oxygen evolution. The PSII complex binds additional chlorophylls, carotenoids and specific lipids. is required as a cofactor.

It localises to the plastid. The protein localises to the chloroplast thylakoid membrane. It carries out the reaction 2 a plastoquinone + 4 hnu + 2 H2O = 2 a plastoquinol + O2. Its function is as follows. Photosystem II (PSII) is a light-driven water:plastoquinone oxidoreductase that uses light energy to abstract electrons from H(2)O, generating O(2) and a proton gradient subsequently used for ATP formation. It consists of a core antenna complex that captures photons, and an electron transfer chain that converts photonic excitation into a charge separation. The D1/D2 (PsbA/PsbD) reaction center heterodimer binds P680, the primary electron donor of PSII as well as several subsequent electron acceptors. D2 is needed for assembly of a stable PSII complex. The protein is Photosystem II D2 protein of Panax ginseng (Korean ginseng).